We begin with the raw amino-acid sequence, 313 residues long: Formimidoylglutamase (313 aa).

Mn(2+) contacts are provided by H130, D155, H157, D159, D241, and D243.

It belongs to the arginase family. The cofactor is Mn(2+).

It catalyses the reaction N-formimidoyl-L-glutamate + H2O = formamide + L-glutamate. It functions in the pathway amino-acid degradation; L-histidine degradation into L-glutamate; L-glutamate from N-formimidoyl-L-glutamate (hydrolase route): step 1/1. Its function is as follows. Catalyzes the conversion of N-formimidoyl-L-glutamate to L-glutamate and formamide. This chain is Formimidoylglutamase, found in Salmonella typhi.